Consider the following 102-residue polypeptide: MKKVLALVVAAAMGLSSAAFAAETAITPAPTATTTKAAPAKTTHHKKQHKAAPAQKAQAAKKHHKNAKAEQKAPEQKAQAAKKHAKKHSHQQPAKPAAQPAA.

A signal peptide spans 1–21 (MKKVLALVVAAAMGLSSAAFA). Positions 22 to 58 (AETAITPAPTATTTKAAPAKTTHHKKQHKAAPAQKAQ) are excised as a propeptide. The span at 26-41 (ITPAPTATTTKAAPAK) shows a compositional bias: low complexity. Positions 26-102 (ITPAPTATTT…PAKPAAQPAA (77 aa)) are disordered. A compositionally biased stretch (basic residues) spans 80-90 (AAKKHAKKHSH). Low complexity predominate over residues 91–102 (QQPAKPAAQPAA).

The protein belongs to the Asr family. Proteolytic processing gives rise to the active protein.

The protein resides in the periplasm. In terms of biological role, required for growth and/or survival at acidic conditions. This Escherichia coli O81 (strain ED1a) protein is Acid shock protein.